Here is a 244-residue protein sequence, read N- to C-terminus: rRNA adenine N-6-methyltransferase (244 aa).

S-adenosyl-L-methionine-binding residues include Asn-11, Ile-13, Gly-38, Glu-59, Asp-84, and Asn-101.

It belongs to the class I-like SAM-binding methyltransferase superfamily. rRNA adenine N(6)-methyltransferase family.

The catalysed reaction is adenosine(2085) in 23S rRNA + 2 S-adenosyl-L-methionine = N(6)-dimethyladenosine(2085) in 23S rRNA + 2 S-adenosyl-L-homocysteine + 2 H(+). Functionally, this protein produces a dimethylation of the adenine residue at position 2085 in 23S rRNA, resulting in reduced affinity between ribosomes and macrolide-lincosamide-streptogramin B antibiotics. The protein is rRNA adenine N-6-methyltransferase (ermC) of Staphylococcus aureus.